Reading from the N-terminus, the 150-residue chain is Suppressor of HU sensitivity involved in recombination protein 1 (150 aa).

As to quaternary structure, component of the SHU complex composed of at least CSM2, PSY3, SHU1 and SHU2.

The protein resides in the nucleus. Plays a role in a RAD51/RAD54-dependent homologous recombination repair (HRR) pathway to repair MMS-induced lesions during S-phase. This chain is Suppressor of HU sensitivity involved in recombination protein 1 (SHU1), found in Saccharomyces cerevisiae (strain ATCC 204508 / S288c) (Baker's yeast).